Here is a 274-residue protein sequence, read N- to C-terminus: Large ribosomal subunit protein uL2 (274 aa).

2 disordered regions span residues 21–59 (KVGLSKDEPEKSLTSGKKSSGGRNNHGRITTRHRGGGHK) and 224–274 (AMNP…QLKG). The span at 32–42 (SLTSGKKSSGG) shows a compositional bias: low complexity. The segment covering 45–59 (NHGRITTRHRGGGHK) has biased composition (basic residues). The segment covering 263-274 (KSSDKYIKQLKG) has biased composition (basic and acidic residues).

It belongs to the universal ribosomal protein uL2 family. As to quaternary structure, part of the 50S ribosomal subunit. Forms a bridge to the 30S subunit in the 70S ribosome.

One of the primary rRNA binding proteins. Required for association of the 30S and 50S subunits to form the 70S ribosome, for tRNA binding and peptide bond formation. It has been suggested to have peptidyltransferase activity; this is somewhat controversial. Makes several contacts with the 16S rRNA in the 70S ribosome. This is Large ribosomal subunit protein uL2 from Wolbachia pipientis wMel.